Reading from the N-terminus, the 451-residue chain is 23S rRNA (uracil(1939)-C(5))-methyltransferase RlmD (451 aa).

The region spanning 20 to 78 (QIPAGKKQRLTIERLSDDGRGIAFLEGKTWFVAGSLAGEEVEARVLNARGKVVEARTER) is the TRAM domain. Residues Cys91, Cys97, Cys100, and Cys179 each coordinate [4Fe-4S] cluster. Residues Gln283, Phe312, Asn317, Glu333, Asp360, and Asp381 each contribute to the S-adenosyl-L-methionine site. Cys407 serves as the catalytic Nucleophile.

The protein belongs to the class I-like SAM-binding methyltransferase superfamily. RNA M5U methyltransferase family. RlmD subfamily.

It catalyses the reaction uridine(1939) in 23S rRNA + S-adenosyl-L-methionine = 5-methyluridine(1939) in 23S rRNA + S-adenosyl-L-homocysteine + H(+). In terms of biological role, catalyzes the formation of 5-methyl-uridine at position 1939 (m5U1939) in 23S rRNA. The protein is 23S rRNA (uracil(1939)-C(5))-methyltransferase RlmD of Pseudomonas savastanoi pv. phaseolicola (strain 1448A / Race 6) (Pseudomonas syringae pv. phaseolicola (strain 1448A / Race 6)).